We begin with the raw amino-acid sequence, 245 residues long: DNA terminal protein (245 aa).

Positions 4-55 (KRLKKKLETKRKKSLLVSEGYSKKETKKLKGRELETVYKKKAHNRKNRERAR) match the Nuclear localization signal motif. The residue at position 194 (tyrosine 194) is an O-(5'-phospho-DNA)-tyrosine.

Interacts with the DNA-binding protein P1.

It localises to the virion. Acts as a primer for viral genomic replication. DNA terminal protein is covalently linked to the 5'-ends of both strands of the genome through a phosphodiester bond between the beta-hydroxyl group of a tyrosine residue and the 5'-phosphate of the terminal deoxythymidylate. This protein is essential for DNA replication and is involved in the priming of DNA elongation. In Bacillus thuringiensis (Bacillus thuringiensis bacteriophage Bam35c), this protein is DNA terminal protein.